A 218-amino-acid polypeptide reads, in one-letter code: DNA endonuclease I-CeuI (218 aa).

Residues glycine 65 and glutamate 66 each contribute to the Mg(2+) site. Residues 71–75 are interaction with DNA; it reads ISTKK. Residue aspartate 86 participates in Mg(2+) binding. 3 interaction with DNA regions span residues 90 to 94, 114 to 116, and 191 to 199; these read NVTQH, RHK, and KQQGQSNEG.

It belongs to the LAGLIDADG endonuclease family. Homodimer. Mg(2+) serves as cofactor.

The protein localises to the plastid. It localises to the chloroplast. In terms of biological role, endonuclease involved in intron homing. Recognizes a degenerate sequence of 17-19 bp to produce a staggered cut 5 bp downstream from the CeLSU.5 intron insertion site. The sequence is that of DNA endonuclease I-CeuI from Chlamydomonas moewusii (Chlamydomonas eugametos).